The primary structure comprises 373 residues: Cell surface Cu-only superoxide dismutase ARB_03674 (373 aa).

The signal sequence occupies residues 1–55 (MIWKQPPRRMGEMGGSLSRRFGNAAASWAVWRVSRSCFSLLFFFYFFLFFSSSSL). Residues Asn-75 and Asn-141 are each glycosylated (N-linked (GlcNAc...) asparagine). 3 residues coordinate Cu cation: His-194, His-196, and His-212. Cysteines 206 and 289 form a disulfide. N-linked (GlcNAc...) asparagine glycans are attached at residues Asn-254 and Asn-274. His-280 provides a ligand contact to Cu cation. N-linked (GlcNAc...) asparagine glycans are attached at residues Asn-283 and Asn-291. Positions 329–348 (GHAPTISATYTPTPTPSPPA) are disordered. Positions 331-340 (APTISATYTP) are enriched in low complexity. Gly-352 carries GPI-anchor amidated glycine lipidation. Positions 353–373 (AGRLVGFSLGAIMAALVPLAL) are cleaved as a propeptide — removed in mature form.

The protein belongs to the Cu-Zn superoxide dismutase family. In terms of assembly, monomer. The cofactor is Cu cation. The GPI-anchor is attached to the protein in the endoplasmic reticulum and serves to target the protein to the cell surface. There, the glucosamine-inositol phospholipid moiety is cleaved off and the GPI-modified mannoprotein is covalently attached via its lipidless GPI glycan remnant to the 1,6-beta-glucan of the outer cell wall layer.

The protein resides in the secreted. Its subcellular location is the cell wall. The protein localises to the cell membrane. The catalysed reaction is 2 superoxide + 2 H(+) = H2O2 + O2. Its function is as follows. Superoxide dismutases serve to convert damaging superoxide radicals, a key form of ROS, to less damaging hydrogen peroxide that can be converted into water by catalase action. Degrades host-derived reactive oxygen species to escape innate immune surveillance. Involved in the occurrence of miconazole-tolerant persisters in biofilms. Persisters are cells that survive high doses of an antimicrobial agent. The unusual attributes of SOD5-like fungal proteins, including the absence of zinc and an open active site that readily captures extracellular copper, make these SODs well suited to meet challenges in zinc and copper availability at the host-pathogen interface. The polypeptide is Cell surface Cu-only superoxide dismutase ARB_03674 (Arthroderma benhamiae (strain ATCC MYA-4681 / CBS 112371) (Trichophyton mentagrophytes)).